The sequence spans 352 residues: Uroporphyrinogen decarboxylase (352 aa).

Residues 26 to 30, D76, Y153, S208, and H323 each bind substrate; that span reads RQAGR.

Belongs to the uroporphyrinogen decarboxylase family. In terms of assembly, homodimer.

Its subcellular location is the cytoplasm. It carries out the reaction uroporphyrinogen III + 4 H(+) = coproporphyrinogen III + 4 CO2. Its pathway is porphyrin-containing compound metabolism; protoporphyrin-IX biosynthesis; coproporphyrinogen-III from 5-aminolevulinate: step 4/4. Its function is as follows. Catalyzes the decarboxylation of four acetate groups of uroporphyrinogen-III to yield coproporphyrinogen-III. This is Uroporphyrinogen decarboxylase from Synechococcus sp. (strain CC9605).